A 100-amino-acid polypeptide reads, in one-letter code: NADH-quinone oxidoreductase subunit K (100 aa).

3 consecutive transmembrane segments (helical) span residues 4–24, 28–48, and 60–80; these read LQHG…GLVI, LLFM…AFVV, and VMYI…LALL.

Belongs to the complex I subunit 4L family. NDH-1 is composed of 13 different subunits. Subunits NuoA, H, J, K, L, M, N constitute the membrane sector of the complex.

The protein localises to the cell inner membrane. The catalysed reaction is a quinone + NADH + 5 H(+)(in) = a quinol + NAD(+) + 4 H(+)(out). Its function is as follows. NDH-1 shuttles electrons from NADH, via FMN and iron-sulfur (Fe-S) centers, to quinones in the respiratory chain. The immediate electron acceptor for the enzyme in this species is believed to be ubiquinone. Couples the redox reaction to proton translocation (for every two electrons transferred, four hydrogen ions are translocated across the cytoplasmic membrane), and thus conserves the redox energy in a proton gradient. The polypeptide is NADH-quinone oxidoreductase subunit K (Shigella sonnei (strain Ss046)).